We begin with the raw amino-acid sequence, 284 residues long: Pantothenate synthetase (284 aa).

31-38 provides a ligand contact to ATP; the sequence is MGNLHAGH. His38 functions as the Proton donor in the catalytic mechanism. Position 62 (Gln62) interacts with (R)-pantoate. Position 62 (Gln62) interacts with beta-alanine. An ATP-binding site is contributed by 150–153; it reads GKKD. Gln156 contributes to the (R)-pantoate binding site. Residues Val179 and 187 to 190 contribute to the ATP site; that span reads MSSR.

Belongs to the pantothenate synthetase family. As to quaternary structure, homodimer.

Its subcellular location is the cytoplasm. It catalyses the reaction (R)-pantoate + beta-alanine + ATP = (R)-pantothenate + AMP + diphosphate + H(+). Its pathway is cofactor biosynthesis; (R)-pantothenate biosynthesis; (R)-pantothenate from (R)-pantoate and beta-alanine: step 1/1. Functionally, catalyzes the condensation of pantoate with beta-alanine in an ATP-dependent reaction via a pantoyl-adenylate intermediate. The sequence is that of Pantothenate synthetase from Xanthomonas campestris pv. campestris (strain 8004).